The sequence spans 178 residues: Gluconokinase (178 aa).

19-26 contributes to the ATP binding site; the sequence is GVSGTGKT.

The protein belongs to the gluconokinase GntK/GntV family. As to quaternary structure, monomer.

It carries out the reaction D-gluconate + ATP = 6-phospho-D-gluconate + ADP + H(+). It participates in carbohydrate acid metabolism; D-gluconate degradation. Its activity is regulated as follows. Activated by magnesium. Its function is as follows. Phosphorylates gluconate to 6-phosphogluconate. This Gluconobacter oxydans (strain 621H) (Gluconobacter suboxydans) protein is Gluconokinase.